The following is a 349-amino-acid chain: Isopentenyl-diphosphate delta-isomerase (349 aa).

Residue 12–13 (RK) coordinates substrate. Residues serine 69, 70 to 72 (SMT), serine 101, and asparagine 129 each bind FMN. Substrate is bound at residue 101 to 103 (SQR). Glutamine 164 is a substrate binding site. Glutamate 165 contacts Mg(2+). FMN contacts are provided by residues lysine 196, threonine 226, 279-281 (GIR), and 300-301 (AA).

Belongs to the IPP isomerase type 2 family. Homooctamer. Dimer of tetramers. FMN serves as cofactor. It depends on NADPH as a cofactor. Mg(2+) is required as a cofactor.

It localises to the cytoplasm. It carries out the reaction isopentenyl diphosphate = dimethylallyl diphosphate. Functionally, involved in the biosynthesis of isoprenoids. Catalyzes the 1,3-allylic rearrangement of the homoallylic substrate isopentenyl (IPP) to its allylic isomer, dimethylallyl diphosphate (DMAPP). The sequence is that of Isopentenyl-diphosphate delta-isomerase from Paracoccus zeaxanthinifaciens.